The chain runs to 413 residues: Putative tRNA pseudouridine synthase C16C4.06c (413 aa).

Aspartate 96 functions as the Nucleophile in the catalytic mechanism. Residue tyrosine 154 participates in substrate binding.

The protein belongs to the tRNA pseudouridine synthase TruA family.

Its subcellular location is the cytoplasm. The protein resides in the nucleus. The enzyme catalyses a uridine in tRNA = a pseudouridine in tRNA. This Schizosaccharomyces pombe (strain 972 / ATCC 24843) (Fission yeast) protein is Putative tRNA pseudouridine synthase C16C4.06c.